Here is a 553-residue protein sequence, read N- to C-terminus: Salicylyl-CoA synthase / salicylate adenylyltransferase (553 aa).

An ATP-binding site is contributed by Gly-203. Residue 246–247 (HN) coordinates substrate. ATP is bound by residues Gly-320, Val-342, Asp-426, Arg-441, and Lys-533. Lys-533 provides a ligand contact to substrate.

The protein belongs to the ATP-dependent AMP-binding enzyme family.

The catalysed reaction is salicylate + ATP + CoA = 2-hydroxybenzoyl-CoA + AMP + diphosphate. Functionally, involved in the degradation of salicylate via a pathway involving coenzyme A derivative. Catalyzes the conversion of salicylate to salicyloyl-CoA via the formation of a salicylate-adenylate intermediate. The substrate specificity is strong, since benzoate, 3-hydroxybenzoate, 4-hydroxybenzoate, gentisate, 2-aminobenzoate, aminobenzoate, salicylamide, salicylaldoxime and 2-hydroxyphenyl acetate cannot substitute for salicylate. The sequence is that of Salicylyl-CoA synthase / salicylate adenylyltransferase from Streptomyces sp.